The sequence spans 296 residues: Acetylglutamate kinase (296 aa).

Substrate is bound by residues 69-70 (GG), R91, and N192.

The protein belongs to the acetylglutamate kinase family. ArgB subfamily.

It localises to the cytoplasm. The enzyme catalyses N-acetyl-L-glutamate + ATP = N-acetyl-L-glutamyl 5-phosphate + ADP. It functions in the pathway amino-acid biosynthesis; L-arginine biosynthesis; N(2)-acetyl-L-ornithine from L-glutamate: step 2/4. Catalyzes the ATP-dependent phosphorylation of N-acetyl-L-glutamate. The polypeptide is Acetylglutamate kinase (Ruthia magnifica subsp. Calyptogena magnifica).